Consider the following 570-residue polypeptide: MSDFEDNNPFAGADRRDSVSSDATDDGPSASFLATNTTNDFGGASFMAGGGSFYGAASQIGGLGGMGMSAYDPESALANPFDDGSNSFSATPTASITNQNDTAHEATNERTTTASQSNIPPIEIIEANKNHEGTSRGFITYTIRVGDVSVRRRYSEFESLRTTLTRMFPTLIVPPIPEKHSITDYAVAPTKAREDKDMIEHRQRMLQVFLNRCRNLPQISNCIVFQRFLDPHASWSEVLNSPPVSTLPRYSLRAPPVDPSNNVTEAHSYLPIPSANGVVRNRGGDEEGKQEAFFAEAEKTAKEYEAVIGGGLEKVARRILKRYTDIAGDYAELGGRFNALSLEESDSRMAATVEKVGQAIDSNYLATNHLVRELGRQFGEPLAESAQFSGVVRSVLKYRKQKALQLELTSDSLEAKRVTLASLESAEADSQRINDALGRTRSNNGPSTTNSGEQPSASPAPKKSSGFKIPGLSSLNSAFNNMMDADPEASRRQGIGKTREQIGQLEQALEVAQKDIVVANESVEKDLERFRAEREADLKCMIRAFLKCHIDWAKQNLDTWQSAQAEVESM.

Disordered stretches follow at residues 1-31 (MSDF…PSAS) and 81-115 (FDDG…TTAS). Polar residues predominate over residues 84–101 (GSNSFSATPTASITNQND). Residues 98 to 236 (NQNDTAHEAT…RFLDPHASWS (139 aa)) form the PX domain. 4 residues coordinate a 1,2-diacyl-sn-glycero-3-phospho-(1D-myo-inositol-3-phosphate): Arg153, Ser155, Lys179, and Arg202. The segment at 429–498 (DSQRINDALG…ASRRQGIGKT (70 aa)) is disordered. Residues 440–454 (TRSNNGPSTTNSGEQ) are compositionally biased toward polar residues. Over residues 455–464 (PSASPAPKKS) the composition is skewed to low complexity.

This sequence belongs to the sorting nexin family.

It localises to the endosome membrane. It is found in the endomembrane system. Functionally, may be required for cytoplasm to vacuole transport (Cvt) and pexophagy. This is Sorting nexin-41 (SNX41) from Yarrowia lipolytica (strain CLIB 122 / E 150) (Yeast).